A 382-amino-acid polypeptide reads, in one-letter code: Galactokinase (382 aa).

34 to 37 provides a ligand contact to substrate; the sequence is EHTD. 124–130 is an ATP binding site; that stretch reads GAGLSSS. Mg(2+)-binding residues include Ser130 and Glu162. Catalysis depends on Asp174, which acts as the Proton acceptor. Tyr223 contributes to the substrate binding site.

This sequence belongs to the GHMP kinase family. GalK subfamily.

The protein resides in the cytoplasm. The enzyme catalyses alpha-D-galactose + ATP = alpha-D-galactose 1-phosphate + ADP + H(+). Its pathway is carbohydrate metabolism; galactose metabolism. Its function is as follows. Catalyzes the transfer of the gamma-phosphate of ATP to D-galactose to form alpha-D-galactose-1-phosphate (Gal-1-P). This Shigella dysenteriae serotype 1 (strain Sd197) protein is Galactokinase.